Reading from the N-terminus, the 320-residue chain is tRNA pseudouridine synthase B (320 aa).

The Nucleophile role is filled by Asp-41. Disordered regions lie at residues 116–136 (PPQV…ARRG) and 259–284 (DQCQ…DPSA). The segment covering 125-136 (QGERAHARARRG) has biased composition (basic and acidic residues). Residues 270–284 (SDQQESAPNQTDPSA) show a composition bias toward polar residues.

Belongs to the pseudouridine synthase TruB family. Type 1 subfamily.

The catalysed reaction is uridine(55) in tRNA = pseudouridine(55) in tRNA. Its function is as follows. Responsible for synthesis of pseudouridine from uracil-55 in the psi GC loop of transfer RNAs. This is tRNA pseudouridine synthase B from Prochlorococcus marinus (strain MIT 9313).